The following is a 223-amino-acid chain: Ribosomal RNA small subunit methyltransferase G (223 aa).

Residues glycine 82, leucine 87, 133-134, and arginine 151 contribute to the S-adenosyl-L-methionine site; that span reads AE.

Belongs to the methyltransferase superfamily. RNA methyltransferase RsmG family.

The protein localises to the cytoplasm. In terms of biological role, specifically methylates the N7 position of guanine in position 518 of 16S rRNA. The protein is Ribosomal RNA small subunit methyltransferase G of Corynebacterium glutamicum (strain ATCC 13032 / DSM 20300 / JCM 1318 / BCRC 11384 / CCUG 27702 / LMG 3730 / NBRC 12168 / NCIMB 10025 / NRRL B-2784 / 534).